Consider the following 293-residue polypeptide: Ubiquinone biosynthesis protein COQ9-B, mitochondrial (293 aa).

Residues 21–73 (LRSDDQKQPPFSSSSTHAETPEHAEEQYQQQQSPPRYTDQAGEESEDYESEEQ) form a disordered region. The span at 29–38 (PPFSSSSTHA) shows a compositional bias: polar residues. Positions 61–72 (AGEESEDYESEE) are enriched in acidic residues. An a 1,2-diacylglycero-3-phosphoethanolamine-binding site is contributed by Arg-219.

It belongs to the COQ9 family. In terms of assembly, homodimer. Heterodimer; two heterodimers of COQ7:COQ9 come together on the same side of the lipid pseudo-bilayer and form a curved tetramer with a hydrophobic surface suitable for membrane interaction. These two tetramers assemble into a soluble octamer with a pseudo-bilayer of lipids captured within. Interacts with COQ7; this interaction allows ubiquinone (CoQ) isoprene intermediates presentation to COQ7 and facilitates the COQ7-mediated hydroxylase step.

The protein localises to the mitochondrion. Its pathway is cofactor biosynthesis; ubiquinone biosynthesis. Functionally, membrane-associated protein that warps the membrane surface to access and bind aromatic isoprenes with high specificity, including ubiquinone (CoQ) isoprene intermediates and presents them directly to COQ7, therefore facilitating the COQ7-mediated hydroxylase step. Participates in the biosynthesis of coenzyme Q, also named ubiquinone, an essential lipid-soluble electron transporter for aerobic cellular respiration. The protein is Ubiquinone biosynthesis protein COQ9-B, mitochondrial (coq9-b) of Xenopus laevis (African clawed frog).